Consider the following 457-residue polypeptide: Flavin-containing monooxygenase FMO GS-OX2 (457 aa).

17–22 is a binding site for FAD; sequence GAGAAG. 211–216 provides a ligand contact to NADP(+); the sequence is GNFASG.

The protein belongs to the FMO family.

The enzyme catalyses a (Z)-omega-(methylsulfanyl)-N-sulfo-alkylhydroximate S-glucoside + NADPH + O2 + H(+) = a (Z)-omega-(methylsulfinyl)-alkyl-glucosinolate + NADP(+) + H2O. Functionally, catalyzes the conversion of methylthioalkyl glucosinolates of any chain length into methylsulfinylalkyl glucosinolates. This is Flavin-containing monooxygenase FMO GS-OX2 (FMOGS-OX2) from Arabidopsis thaliana (Mouse-ear cress).